A 640-amino-acid polypeptide reads, in one-letter code: Protein cereblon (640 aa).

A compositionally biased stretch (acidic residues) spans 1–11; the sequence is MDDEETAEIDE. Disordered stretches follow at residues 1–25 and 92–159; these read MDDE…ELGP and REDP…EAVP. The span at 113-137 shows a compositional bias: low complexity; sequence QPAQQEEQASLPYDSPSRASISSRH. The region spanning 278–506 is the Lon N-terminal domain; the sequence is RMLIFMHQHI…IIDTTLKQES (229 aa). A CULT domain is found at 505 to 614; the sequence is ESLFYCRYCN…LAGSSVRIGK (110 aa). Zn(2+) contacts are provided by cysteine 510, cysteine 513, cysteine 579, and cysteine 582.

Belongs to the CRBN family. Likely a component of a DCX (DDB1-CUL4-X-box) protein ligase complex. May interact with pic/DDB1. Post-translationally, ubiquitinated.

The protein localises to the nucleus. It participates in protein modification; protein ubiquitination. Functionally, substrate recognition component of a DCX (DDB1-CUL4-X-box) E3 protein ligase complex that mediates the ubiquitination and subsequent proteasomal degradation of target proteins. Has an essential role in mediating growth by negatively regulating insulin signaling. It also has a role in maintaining presynaptic function in the neuromuscular junction synapses of third-instar larvae. This chain is Protein cereblon, found in Drosophila virilis (Fruit fly).